Reading from the N-terminus, the 512-residue chain is Dihydroniloticin synthase CYP71CD2 (512 aa).

A helical membrane pass occupies residues Met1 to Phe21. Residue Asn436 participates in heme binding.

This sequence belongs to the cytochrome P450 family. The cofactor is heme. In terms of tissue distribution, mainly expressed in petioles and roots, and, to a lower extent, in leaves.

The protein localises to the membrane. The enzyme catalyses tirucalla-7,24-dien-3beta-ol + 2 reduced [NADPH--hemoprotein reductase] + 2 O2 = dihydroniloticin + 2 oxidized [NADPH--hemoprotein reductase] + 2 H2O + 2 H(+). Its pathway is secondary metabolite biosynthesis; terpenoid biosynthesis. Functionally, monooxygenase involved in the biosynthesis of limonoids triterpene natural products such as azadirachtin, an antifeedant widely used as bioinsecticide, and possessing many medicinal applications including anti-tumoral, anti-malarial, anti-rheumatic, antibacterial, anti-inflammatory, anti-pyretic and diuretic effects. Catalyzes the conversion of tirucalladienol to dihydroniloticin. This chain is Dihydroniloticin synthase CYP71CD2, found in Melia azedarach (Chinaberry tree).